A 456-amino-acid polypeptide reads, in one-letter code: Histidine--tRNA ligase (456 aa).

Belongs to the class-II aminoacyl-tRNA synthetase family. As to quaternary structure, homodimer.

The protein resides in the cytoplasm. The catalysed reaction is tRNA(His) + L-histidine + ATP = L-histidyl-tRNA(His) + AMP + diphosphate + H(+). The sequence is that of Histidine--tRNA ligase (hisS) from Borreliella burgdorferi (strain ATCC 35210 / DSM 4680 / CIP 102532 / B31) (Borrelia burgdorferi).